We begin with the raw amino-acid sequence, 394 residues long: Elongation factor Tu (394 aa).

Positions 10–204 (KPHVNIGTIG…AVDSYIPQPV (195 aa)) constitute a tr-type G domain. The tract at residues 19–26 (GHVDHGKT) is G1. 19 to 26 (GHVDHGKT) serves as a coordination point for GTP. Mg(2+) is bound at residue T26. The segment at 60-64 (GITIS) is G2. Residues 81 to 84 (DCPG) form a G3 region. GTP-binding positions include 81-85 (DCPGH) and 136-139 (NKVD). The interval 136–139 (NKVD) is G4. Positions 174–176 (SAL) are G5.

Belongs to the TRAFAC class translation factor GTPase superfamily. Classic translation factor GTPase family. EF-Tu/EF-1A subfamily. Monomer.

The protein resides in the cytoplasm. It catalyses the reaction GTP + H2O = GDP + phosphate + H(+). Its function is as follows. GTP hydrolase that promotes the GTP-dependent binding of aminoacyl-tRNA to the A-site of ribosomes during protein biosynthesis. The sequence is that of Elongation factor Tu from Rickettsia massiliae (strain Mtu5).